Consider the following 294-residue polypeptide: Probable ABC transporter permease protein YqgI (294 aa).

Helical transmembrane passes span 14–34 (FGLC…YIII), 66–86 (FYIL…GGVF), 99–121 (FIRT…FGLL), 126–148 (LTGW…LPVM), 190–210 (IITG…ALLF), and 260–280 (AIAN…NLAA). In terms of domain architecture, ABC transmembrane type-1 spans 62–280 (LFNSFYILFI…ISVLVFNLAA (219 aa)).

Belongs to the binding-protein-dependent transport system permease family. CysTW subfamily.

Its subcellular location is the cell membrane. Its function is as follows. Part of the binding-protein-dependent transport system YqgGHIJK. Probably responsible for the translocation of the substrate across the membrane. The chain is Probable ABC transporter permease protein YqgI (yqgI) from Bacillus subtilis (strain 168).